Consider the following 931-residue polypeptide: Protein translocase subunit SecA (931 aa).

Residues glutamine 87, 105–109 (GEGKT), and aspartate 515 each bind ATP. Cysteine 915, cysteine 917, cysteine 926, and histidine 927 together coordinate Zn(2+).

It belongs to the SecA family. Monomer and homodimer. Part of the essential Sec protein translocation apparatus which comprises SecA, SecYEG and auxiliary proteins SecDF-YajC and YidC. The cofactor is Zn(2+).

Its subcellular location is the cell inner membrane. The protein resides in the cytoplasm. It carries out the reaction ATP + H2O + cellular proteinSide 1 = ADP + phosphate + cellular proteinSide 2.. Part of the Sec protein translocase complex. Interacts with the SecYEG preprotein conducting channel. Has a central role in coupling the hydrolysis of ATP to the transfer of proteins into and across the cell membrane, serving both as a receptor for the preprotein-SecB complex and as an ATP-driven molecular motor driving the stepwise translocation of polypeptide chains across the membrane. This chain is Protein translocase subunit SecA, found in Burkholderia pseudomallei (strain 1106a).